Reading from the N-terminus, the 178-residue chain is M-phase-specific PLK1-interacting protein (178 aa).

Over residues 1 to 15 the composition is skewed to pro residues; sequence MHRPNFRPPTPPYPS. The disordered stretch occupies residues 1-134; that stretch reads MHRPNFRPPT…RGREKRMSNE (134 aa). Gly residues predominate over residues 17 to 34; that stretch reads GIGGWGGGNNFRGALGGG. At Arg36 the chain carries Asymmetric dimethylarginine. Ser39 and Ser46 each carry phosphoserine. At Thr50 the chain carries Phosphothreonine. Position 56 is an omega-N-methylarginine (Arg56). Asymmetric dimethylarginine occurs at positions 58, 67, and 76. The span at 78–96 shows a compositional bias: low complexity; the sequence is GSPSPGGYPGSYSRSPAGS. Phosphoserine is present on residues Ser79, Ser81, Ser92, Ser103, and Ser114. Over residues 97 to 121 the composition is skewed to polar residues; that stretch reads QHQFGYSPGQQQTYPQGSPRTSTPF. Omega-N-methylarginine is present on Arg116. Thr119 bears the Phosphothreonine mark. Phosphoserine is present on residues Ser123 and Ser132.

As to quaternary structure, interacts with PLK1; phosphorylation-dependent. Post-translationally, phosphorylated during mitosis in the cell cycle probably by CDK1.

The protein localises to the nucleus. The protein resides in the cytoplasm. It is found in the cytoskeleton. It localises to the microtubule organizing center. Its subcellular location is the centrosome. May play a role in maintenance of cell cycle integrity by regulating mitosis or cytokinesis. This chain is M-phase-specific PLK1-interacting protein (Mplkip), found in Mus musculus (Mouse).